Reading from the N-terminus, the 486-residue chain is Patatin-like phospholipase domain-containing protein 2 (486 aa).

Over 1 to 8 (MFPKETTW) the chain is Cytoplasmic. A helical membrane pass occupies residues 9–29 (NISFAGCGFLGVYHIGVASCL). A PNPLA domain is found at 10-179 (ISFAGCGFLG…SDNLPLYELK (170 aa)). The GXGXXG signature appears at 14–19 (GCGFLG). At 30–42 (REHAPFLVANATH) the chain is on the extracellular side. An N-linked (GlcNAc...) asparagine glycan is attached at N39. The chain crosses the membrane as a helical span at residues 43–63 (IYGASAGALTATALVTGACLG). A GXSXG motif is present at residues 45 to 49 (GASAG). The Nucleophile role is filled by S47. The Cytoplasmic portion of the chain corresponds to 64 to 137 (EAGANIIEVS…IITHFNSKEE (74 aa)). A Glycyl lysine isopeptide (Lys-Gly) (interchain with G-Cter in ubiquitin) cross-link involves residue K92. A helical membrane pass occupies residues 138-158 (LIQANVCSTFIPVYCGLIPPS). The Extracellular segment spans residues 159 to 334 (LQGVRYVDGG…TTLSNMLPVR (176 aa)). The active-site Proton acceptor is D166. The DGA/G signature appears at 166–168 (DGG). The helical transmembrane segment at 335 to 355 (LAMAMMVPYTLPLESAVSFTI) threads the bilayer. Residues 356 to 486 (RLLEWLPDVP…PQHPPSSPPC (131 aa)) lie on the Cytoplasmic side of the membrane. Position 377 is a phosphoserine; in vitro (S377). Phosphoserine; by PKA is present on residues S399 and S409. The residue at position 433 (S433) is a Phosphoserine; in vitro.

As to quaternary structure, interacts with ABHD5; this association stimulates PNPLA2 triglyceride hydrolase activity. Interacts with SERPINF1; this interaction stimulates the phospholipase A2 activity of PNPLA2. Despite a colocalization in lipid droplets, it probably does not interact with PLIN. Interacts with PLIN5; prevents interaction with ABHD5. Interacts with FAF2. Post-translationally, phosphorylation at Ser-409 by PKA is increased during fasting and moderate intensity exercise, and moderately increases lipolytic activity. In terms of processing, ubiquitinated by PEX2 in response to reactive oxygen species (ROS), leading to its degradation. Ubiquitination is stimulated by LDAH.

Its subcellular location is the lipid droplet. The protein resides in the cell membrane. It is found in the cytoplasm. The catalysed reaction is a triacylglycerol + H2O = a diacylglycerol + a fatty acid + H(+). It carries out the reaction a triacylglycerol + H2O = a 1,2-diacylglycerol + a fatty acid + H(+). It catalyses the reaction a triacylglycerol + H2O = a 1,3-diacylglycerol + a fatty acid + H(+). The enzyme catalyses a triacyl-sn-glycerol + H2O = a 1,3-diacyl-sn-glycerol + a fatty acid + H(+). The catalysed reaction is a triacyl-sn-glycerol + H2O = a 2,3-diacyl-sn-glycerol + a fatty acid + H(+). It carries out the reaction a 1-acylglycerol + a 1,3-diacylglycerol = a triacylglycerol + glycerol. It catalyses the reaction a 1-acylglycerol + a 1,2-diacylglycerol = a triacylglycerol + glycerol. The enzyme catalyses 2 a 1-acylglycerol = a 1,2-diacylglycerol + glycerol. The catalysed reaction is a triacylglycerol + all-trans-retinol = an all-trans-retinyl ester + a diacylglycerol. It carries out the reaction 1,2-di-(9Z-octadecenoyl)-glycerol + (9Z)-octadecenoate + H(+) = 1,2,3-tri-(9Z-octadecenoyl)-glycerol + H2O. It catalyses the reaction 1,2,3-tri-(9Z-octadecenoyl)-glycerol + H2O = 1,3-di-(9Z-octadecenoyl)-glycerol + (9Z)-octadecenoate + H(+). The enzyme catalyses 1-(9Z-octadecenoyl)-glycerol + 1,3-di-(9Z-octadecenoyl)-glycerol = 1,2,3-tri-(9Z-octadecenoyl)-glycerol + glycerol. The catalysed reaction is 1-(9Z-octadecenoyl)-glycerol + 1,2-di-(9Z-octadecenoyl)-glycerol = 1,2,3-tri-(9Z-octadecenoyl)-glycerol + glycerol. It carries out the reaction 2 1-(9Z-octadecenoyl)-glycerol = 1,2-di-(9Z-octadecenoyl)-glycerol + glycerol. It catalyses the reaction 1,2,3-tri-(9Z-octadecenoyl)-glycerol + all-trans-retinol = all-trans-retinyl 9Z-octadecenoate + di-(9Z)-octadecenoylglycerol. The enzyme catalyses 1,2,3-tri-(9Z)-hexadecenoylglycerol + H2O = 1,3-di-(9Z)-hexadecenoylglycerol + (9Z)-hexadecenoate + H(+). The catalysed reaction is 1,2,3-tri-(9Z,12Z)-octadecadienoylglycerol + H2O = 1,3-di-(9Z,12Z)-octadecadienoylglycerol + (9Z,12Z)-octadecadienoate + H(+). It carries out the reaction 1,2,3-tri-(9Z,12Z,15Z)-octadecatrienoylglycerol + H2O = 1,3-di-(9Z,12Z,15Z)-octadecatrienoylglycerol + (9Z,12Z,15Z)-octadecatrienoate + H(+). It catalyses the reaction 1,3-di-(9Z)-octadecenoyl-2-hexadecanoylglycerol + H2O = 1,3-di-(9Z-octadecenoyl)-glycerol + hexadecanoate + H(+). The enzyme catalyses 1,2-di-(9Z)-octadecenoyl-3-hexadecanoyl-sn-glycerol + H2O = 1-(9Z)-octadecenoyl-3-hexadecanoyl-sn-glycerol + (9Z)-octadecenoate + H(+). The catalysed reaction is 1-hexadecanoyl-2,3-di-(9Z)-octadecenoyl-sn-glycerol + H2O = 1-hexadecanoyl-3-(9Z)-octadecenoyl-sn-glycerol + (9Z)-octadecenoate + H(+). It carries out the reaction 1,2,3-tri-(9Z-octadecenoyl)-glycerol + H2O = 2,3-di-(9Z)-octadecenoyl-sn-glycerol + (9Z)-octadecenoate + H(+). It catalyses the reaction 1,2,3-tri-(9Z)-hexadecenoylglycerol + H2O = 2,3-di-(9Z)-hexadecenoyl-sn-glycerol + (9Z)-hexadecenoate + H(+). The enzyme catalyses 1,2,3-tri-(9Z,12Z)-octadecadienoylglycerol + H2O = 2,3-di-(9Z,12Z)-octadecadienoyl-sn-glycerol + (9Z,12Z)-octadecadienoate + H(+). The catalysed reaction is 1,2,3-tri-(9Z,12Z,15Z)-octadecatrienoylglycerol + H2O = 2,3-di-(9Z,12Z,15Z)-octadecatrienoyl-sn-glycerol + (9Z,12Z,15Z)-octadecatrienoate + H(+). It carries out the reaction 1,3-di-(9Z)-octadecenoyl-2-hexadecanoylglycerol + H2O = 2-hexadecanoyl-3-(9Z)-octadecenoyl-sn-glycerol + (9Z)-octadecenoate + H(+). It catalyses the reaction 1-hexadecanoyl-2,3-di-(9Z)-octadecenoyl-sn-glycerol + H2O = 2,3-di-(9Z)-octadecenoyl-sn-glycerol + hexadecanoate + H(+). The enzyme catalyses 1,2-di-(9Z)-octadecenoyl-3-hexadecanoyl-sn-glycerol + H2O = 2-(9Z-octadecenoyl)-3-hexadecanoyl-sn-glycerol + (9Z)-octadecenoate + H(+). The catalysed reaction is a 1,2-diacyl-sn-glycero-3-phosphocholine + H2O = a 1-acyl-sn-glycero-3-phosphocholine + a fatty acid + H(+). It carries out the reaction 1,2,3-tri-(9Z-octadecenoyl)-glycerol + 9-hydroxy-octadecanoate = 9-(9Z-octadecenoyloxy)-octadecanoate + 2,3-di-(9Z)-octadecenoyl-sn-glycerol. It catalyses the reaction 1-hexadecanoyl-2,3-di-(9Z)-octadecenoyl-sn-glycerol + 9-hydroxy-octadecanoate = 9-hexadecanoyloxy-octadecanoate + 2,3-di-(9Z)-octadecenoyl-sn-glycerol. The enzyme catalyses 1,2,3-tri-(10Z)-heptadecenoylglycerol + 9-hydroxy-octadecanoate = 2,3-di-(10Z-heptadecenoyl)-sn-glycerol + 9-(10Z-heptadecenoyloxy)-octadecanoate. The catalysed reaction is 1,2,3-tri-(9Z,12Z)-octadecadienoylglycerol + 9-hydroxy-octadecanoate = 2,3-di-(9Z,12Z)-octadecadienoyl-sn-glycerol + 9-(9Z,12Z-octadecadienoyloxy)-octadecanoate. It carries out the reaction 1,2,3-tri-(9Z)-hexadecenoylglycerol + 9-hydroxy-octadecanoate = 2,3-di-(9Z)-hexadecenoyl-sn-glycerol + 9-(9Z-hexadecenoyloxy)-octadecanoate. It catalyses the reaction 9-hydroxy-octadecanoate + 1,2-di-(9Z-octadecenoyl)-sn-glycerol = 9-(9Z-octadecenoyloxy)-octadecanoate + 2-(9Z-octadecenoyl)-glycerol. The enzyme catalyses 1-hexadecanoyl-2,3-di-(9Z)-octadecenoyl-sn-glycerol + 9-hydroxy-octadecanoate = 1-hexadecanoyl-3-(9Z)-octadecenoyl-sn-glycerol + 9-(9Z-octadecenoyloxy)-octadecanoate. It participates in glycerolipid metabolism; triacylglycerol degradation. In terms of biological role, catalyzes the initial step in triglyceride hydrolysis in adipocyte and non-adipocyte lipid droplets. Exhibits a strong preference for the hydrolysis of long-chain fatty acid esters at the sn-2 position of the glycerol backbone and acts coordinately with LIPE/HLS and DGAT2 within the lipolytic cascade. Also possesses acylglycerol transacylase and phospholipase A2 activities. Transfers fatty acid from triglyceride to retinol, hydrolyzes retinylesters, and generates 1,3-diacylglycerol from triglycerides. Regulates adiposome size and may be involved in the degradation of adiposomes. Catalyzes the formation of an ester bond between hydroxy fatty acids and fatty acids derived from triglycerides or diglycerides to generate fatty acid esters of hydroxy fatty acids (FAHFAs) in adipocytes. Acts antagonistically with LDAH in regulation of cellular lipid stores. Inhibits LDAH-stimulated lipid droplet fusion. May play an important role in energy homeostasis. May play a role in the response of the organism to starvation, enhancing hydrolysis of triglycerides and providing free fatty acids to other tissues to be oxidized in situations of energy depletion. The polypeptide is Patatin-like phospholipase domain-containing protein 2 (PNPLA2) (Bos taurus (Bovine)).